The primary structure comprises 121 residues: Small ribosomal subunit protein uS13 (121 aa).

Positions 92-121 are disordered; the sequence is RKGLPMRGQRTRTNARTRKGPRRAAQALKK.

This sequence belongs to the universal ribosomal protein uS13 family. In terms of assembly, part of the 30S ribosomal subunit. Forms a loose heterodimer with protein S19. Forms two bridges to the 50S subunit in the 70S ribosome.

In terms of biological role, located at the top of the head of the 30S subunit, it contacts several helices of the 16S rRNA. In the 70S ribosome it contacts the 23S rRNA (bridge B1a) and protein L5 of the 50S subunit (bridge B1b), connecting the 2 subunits; these bridges are implicated in subunit movement. Contacts the tRNAs in the A and P-sites. The polypeptide is Small ribosomal subunit protein uS13 (Burkholderia cenocepacia (strain HI2424)).